The following is a 390-amino-acid chain: MEKEIKDHKSVGIVEKQFFTCAQVPSPLILENGAKLGPITIAYETYGNLSARKDNAILINHAFSGDSHVAGHYATDGPKEKPGWWDFLVGPGKGIDTDKYFIICSNILGSCNGTTGPASKNSETGEAYALDFPMVTIGDMVATQKLLIDHLGIPKLLAVIGGSVGGMQTLEWAIRYPEMMHSVIPIATTMRHSALAIAFNEIARQAIMTDPHWNRGKYYGQAHPDTGLAVARMVGHVTYLSDEAMRRKFGRNLQEKENLSYGFDADFQVESYLRYQGNKFVHRFDANSLLYITKASDYFDIVERISTSGPETELTAPQQKYLVISYSSDWLYPTYQARDLVKALKRSGRNVSFSEIESDCGHDAFLIPDDRLEQLMRGFLAGIYTGIAEI.

The AB hydrolase-1 domain maps to 55 to 366 (NAILINHAFS…ESDCGHDAFL (312 aa)). The active-site Nucleophile is S163. Position 232 (R232) interacts with substrate. Active-site residues include D329 and H362. Position 363 (D363) interacts with substrate.

This sequence belongs to the AB hydrolase superfamily. MetX family. As to quaternary structure, homodimer.

It is found in the cytoplasm. It catalyses the reaction L-homoserine + acetyl-CoA = O-acetyl-L-homoserine + CoA. It participates in amino-acid biosynthesis; L-methionine biosynthesis via de novo pathway; O-acetyl-L-homoserine from L-homoserine: step 1/1. Its function is as follows. Transfers an acetyl group from acetyl-CoA to L-homoserine, forming acetyl-L-homoserine. This Desulfotalea psychrophila (strain LSv54 / DSM 12343) protein is Homoserine O-acetyltransferase.